Here is a 196-residue protein sequence, read N- to C-terminus: Nitrogen regulatory protein P-II homolog (196 aa).

The N-terminal 61 residues, 1-61, are a transit peptide targeting the chloroplast; it reads MAASMTKPIS…NNSRVLPVVS (61 aa). Residues 108-112 and 161-164 each bind ATP; these read GFGAQ and GDGK. Position 110 (glycine 110) interacts with Mg(2+).

It belongs to the P(II) protein family. In terms of assembly, homodimer. Interacts with NAGK. Interaction with NAGK is dependent of MgATP and inhibited by 2-oxoglutarate, arginine, glutamate, citrate, and oxaloacetate.

The protein resides in the plastid. It is found in the chloroplast. In terms of biological role, participates in sensing carbon and organic nitrogen status and regulates some steps of primary carbon and nitrogen metabolism. Required for nitrite uptake in chloroplasts and regulates arginine biosynthesis through interaction with acetylglutamate kinase (NAGK) in chloroplasts. Regulates fatty acids synthesis in chloroplasts by interacting with the acetyl-CoA carboxylase complex and inhibiting acetyl-CoA carboxylase (ACCase) activity. In Arabidopsis thaliana (Mouse-ear cress), this protein is Nitrogen regulatory protein P-II homolog (GLB1).